Reading from the N-terminus, the 64-residue chain is Chromatin protein Cren7 (64 aa).

Belongs to the Cren7 family. Monomer. Methylated at multiple sites, to varying extents.

The protein resides in the chromosome. The protein localises to the cytoplasm. Its function is as follows. A chromatin protein, binds double-stranded DNA without sequence specificity. Constrains negative DNA supercoils. The polypeptide is Chromatin protein Cren7 (Aeropyrum pernix (strain ATCC 700893 / DSM 11879 / JCM 9820 / NBRC 100138 / K1)).